Reading from the N-terminus, the 990-residue chain is Chondroitin sulfate ABC exolyase (990 aa).

Catalysis depends on H453, which acts as the Proton acceptor. Y460 acts as the Proton donor in catalysis.

Belongs to the polysaccharide lyase 8 family.

It carries out the reaction Exolytic removal of Delta(4)-unsaturated disaccharide residues from the non-reducing ends of both polymeric chondroitin/dermatan sulfates and their oligosaccharide fragments.. Its activity is regulated as follows. Inhibited by Zn(2+), whereas Ni(2+), Fe(2+), and Cu(2+) have little or no effect on activity. Broad-specificity glycosaminoglycan lyase, which acts in an exolytic fashion, and preferentially degrades the tetra- and hexasaccharide derivatives of chondroitin sulfate and dermatan sulfate produced by the chondroitin sulfate ABC endolyase, to yield the respective disaccharides. To a lesser extent, is also able to split off disaccharide residues directly from polymeric chondroitin 4- and 6-sulfate, dermatan sulfate, chondroitin, and hyaluronan. Is not active against keratan sulfate, heparan sulfate, and heparin. The sequence is that of Chondroitin sulfate ABC exolyase (ChABCII) from Proteus vulgaris.